The following is a 298-amino-acid chain: uncharacterized protein (298 aa).

This is an uncharacterized protein from Acanthamoeba polyphaga mimivirus (APMV).